A 194-amino-acid chain; its full sequence is Early growth response protein 1 (194 aa).

3 C2H2-type zinc fingers span residues 1–18 (CDRR…IRIH), 24–46 (FQCR…IRTH), and 52–74 (FACD…TKIH).

It belongs to the EGR C2H2-type zinc-finger protein family.

It is found in the nucleus. It localises to the cytoplasm. Transcriptional regulator. Recognizes and binds to the DNA sequence 5'-GCG(T/G)GGGCG-3'(EGR-site) in the promoter region of target genes. Binds double-stranded target DNA, irrespective of the cytosine methylation status. Regulates the transcription of numerous target genes, and thereby plays an important role in regulating the response to growth factors, DNA damage, and ischemia. Plays a role in the regulation of cell survival, proliferation and cell death. Mediates responses to ischemia and hypoxia; regulates the expression of proteins that are involved in inflammatory processes. Plays a role in regulating the expression of circadian clock genes. This Gallus gallus (Chicken) protein is Early growth response protein 1 (EGR1).